We begin with the raw amino-acid sequence, 100 residues long: Aspartyl/glutamyl-tRNA(Asn/Gln) amidotransferase subunit C (100 aa).

Belongs to the GatC family. As to quaternary structure, heterotrimer of A, B and C subunits.

It catalyses the reaction L-glutamyl-tRNA(Gln) + L-glutamine + ATP + H2O = L-glutaminyl-tRNA(Gln) + L-glutamate + ADP + phosphate + H(+). The enzyme catalyses L-aspartyl-tRNA(Asn) + L-glutamine + ATP + H2O = L-asparaginyl-tRNA(Asn) + L-glutamate + ADP + phosphate + 2 H(+). In terms of biological role, allows the formation of correctly charged Asn-tRNA(Asn) or Gln-tRNA(Gln) through the transamidation of misacylated Asp-tRNA(Asn) or Glu-tRNA(Gln) in organisms which lack either or both of asparaginyl-tRNA or glutaminyl-tRNA synthetases. The reaction takes place in the presence of glutamine and ATP through an activated phospho-Asp-tRNA(Asn) or phospho-Glu-tRNA(Gln). This Streptococcus suis (strain 98HAH33) protein is Aspartyl/glutamyl-tRNA(Asn/Gln) amidotransferase subunit C.